The following is a 175-amino-acid chain: Receptor activity-modifying protein 2 (175 aa).

The N-terminal stretch at 1-42 (MASLRVERAGGPRLPRTRVGRPAALRLLLLLGAVLNPHEALA) is a signal peptide. Topologically, residues 43 to 143 (QPLPTTGTPG…VQPTFSDPPE (101 aa)) are extracellular. Cystine bridges form between cysteine 68-cysteine 99 and cysteine 84-cysteine 131. The N-linked (GlcNAc...) asparagine glycan is linked to asparagine 130. The chain crosses the membrane as a helical span at residues 144 to 165 (DVLLAMIIAPICLIPFLITLVV). The Cytoplasmic segment spans residues 166-175 (WRSKDSEAQA).

Belongs to the RAMP family. As to quaternary structure, heterodimer of CALCRL and RAMP2; the interaction forms the receptor complex for adrenomedullin/ADM. Heterodimer of CALCR and RAMP2; interaction forms the AMYR2 receptor complex for calcitonin/CALC and amylin/IAPP. As to expression, strongly expressed in lung, breast, immune system and fetal tissues.

It localises to the cell membrane. Its function is as follows. Accessory protein that interacts with and modulates the function of G-protein coupled receptors including calcitonin gene-related peptide type 1 receptor (CALCRL) and calcitonin receptor (CALCR). Required for the transport of CALCRL to the plasma membrane. Together with CALCRL, form a receptor complex for adrenomedullin/ADM. Together with CALCR, act as a receptor complex for calcitonin/CT/CALC. Together with CALCR, also act as a receptor complex for amylin/IAPP. This Homo sapiens (Human) protein is Receptor activity-modifying protein 2.